The sequence spans 184 residues: Fruit protein pKIWI501 (184 aa).

The interval Met-1–Glu-184 is disordered. Composition is skewed to low complexity over residues Pro-25–Ala-36 and Pro-53–Thr-65. Positions Glu-72–Val-92 are enriched in acidic residues. Residues Ala-96–Glu-119 show a composition bias toward basic and acidic residues. Positions Ala-120–Gly-156 are enriched in low complexity. Residues Pro-159 to Glu-168 are compositionally biased toward basic and acidic residues.

The protein to H.brasiliensis latex allergen Hev b 5.

This is Fruit protein pKIWI501 from Actinidia deliciosa (Kiwi).